A 303-amino-acid polypeptide reads, in one-letter code: N-acetyl-D-glucosamine kinase (303 aa).

Residues 4–11 (GFDIGGTK) and 133–140 (GVGGGLVF) each bind ATP. Residues His-157, Cys-177, Cys-179, and Cys-184 each contribute to the Zn(2+) site.

Belongs to the ROK (NagC/XylR) family. NagK subfamily.

It catalyses the reaction N-acetyl-D-glucosamine + ATP = N-acetyl-D-glucosamine 6-phosphate + ADP + H(+). It functions in the pathway cell wall biogenesis; peptidoglycan recycling. Catalyzes the phosphorylation of N-acetyl-D-glucosamine (GlcNAc) derived from cell-wall degradation, yielding GlcNAc-6-P. This chain is N-acetyl-D-glucosamine kinase, found in Shigella flexneri serotype 5b (strain 8401).